The chain runs to 121 residues: Small ribosomal subunit protein uS13 (121 aa).

The segment at 94-121 (GLPVRGQRTRTNSRTRKGPKKGAAALKK) is disordered.

Belongs to the universal ribosomal protein uS13 family. Part of the 30S ribosomal subunit. Forms a loose heterodimer with protein S19. Forms two bridges to the 50S subunit in the 70S ribosome.

Located at the top of the head of the 30S subunit, it contacts several helices of the 16S rRNA. In the 70S ribosome it contacts the 23S rRNA (bridge B1a) and protein L5 of the 50S subunit (bridge B1b), connecting the 2 subunits; these bridges are implicated in subunit movement. Contacts the tRNAs in the A and P-sites. The chain is Small ribosomal subunit protein uS13 from Leptothrix cholodnii (strain ATCC 51168 / LMG 8142 / SP-6) (Leptothrix discophora (strain SP-6)).